The chain runs to 103 residues: Large ribosomal subunit protein eL14 (103 aa).

This sequence belongs to the eukaryotic ribosomal protein eL14 family.

This is Large ribosomal subunit protein eL14 from Ignicoccus hospitalis (strain KIN4/I / DSM 18386 / JCM 14125).